The following is a 418-amino-acid chain: UDP-N-acetylglucosamine 1-carboxyvinyltransferase (418 aa).

22–23 (KN) is a binding site for phosphoenolpyruvate. UDP-N-acetyl-alpha-D-glucosamine is bound at residue Arg91. The Proton donor role is filled by Cys115. 2-(S-cysteinyl)pyruvic acid O-phosphothioketal is present on Cys115. Residues 120 to 124 (RPVDL), 160 to 163 (KVSV), Asp305, and Ile327 each bind UDP-N-acetyl-alpha-D-glucosamine.

This sequence belongs to the EPSP synthase family. MurA subfamily.

It localises to the cytoplasm. It carries out the reaction phosphoenolpyruvate + UDP-N-acetyl-alpha-D-glucosamine = UDP-N-acetyl-3-O-(1-carboxyvinyl)-alpha-D-glucosamine + phosphate. Its pathway is cell wall biogenesis; peptidoglycan biosynthesis. Its function is as follows. Cell wall formation. Adds enolpyruvyl to UDP-N-acetylglucosamine. In Baumannia cicadellinicola subsp. Homalodisca coagulata, this protein is UDP-N-acetylglucosamine 1-carboxyvinyltransferase.